The chain runs to 652 residues: Leucine-rich repeat-containing protein 4 (652 aa).

A signal peptide spans 1-40 (MKLLWQVTVHHTWNAVLLPVVYLTAQVWILCAAIAAAASA). Residues 41-74 (GPQNCPSVCSCSNQFSKVVCTRRGLSEVPQGIPS) form the LRRNT domain. The Extracellular portion of the chain corresponds to 41–526 (GPQNCPSVCS…SLDEVMKTTK (486 aa)). 2 cysteine pairs are disulfide-bonded: cysteine 45–cysteine 51 and cysteine 49–cysteine 60. LRR repeat units lie at residues 75–96 (NTRYLNLMENNIQMIQADTFRH), 99–120 (HLEVLQLGRNSIRQIEVGAFNG), 123–144 (SLNTLELFDNWLTVIPSGAFEY), 147–168 (KLRELWLRNNPIESIPSYAFNR), 171–193 (SLMRLDLGELKKLEYISEGAFEG), 196–217 (NLKYLNLGMCNIKDMPNLTPLV), 218–239 (GLEELEMSGNHFPEIRPGSFHG), 242–263 (SLKKLWVMNSQVSLIERNAFDG), and 266–287 (SLVELNLAHNNLSSLPHDLFTP). Asparagine 276, asparagine 321, asparagine 362, asparagine 387, asparagine 409, asparagine 433, asparagine 439, and asparagine 449 each carry an N-linked (GlcNAc...) asparagine glycan. The LRRCT domain maps to 299–351 (NPWNCDCDILWLAWWLREYIPTNSTCCGRCHAPMHMRGRYLVEVDQAAFQCSA). 2 cysteine pairs are disulfide-bonded: cysteine 303–cysteine 328 and cysteine 305–cysteine 349. The Ig-like domain occupies 352–441 (PFIMDAPRDL…SNASAYLNVS (90 aa)). Cysteine 373 and cysteine 423 form a disulfide bridge. A helical transmembrane segment spans residues 527 to 547 (IIIGCFVAVTLLAAAMLIVFY). The Cytoplasmic portion of the chain corresponds to 548-652 (KLRKRHQQRS…TKDKVQETQI (105 aa)).

Interacts (via LRR repeats) with NTNG2. Interacts with DLG4. Forms a complex with DLG4 and with NMDA receptors. N-glycosylated. As to expression, specifically expressed in brain. In the hippocampus, parietal cortex and piriform cortex expressed in proximal segments of CA1 pyramidal neurons.

It localises to the membrane. The protein localises to the postsynaptic cell membrane. Its function is as follows. Synaptic adhesion protein. Regulates the formation of exitatory synapses through the recruitment of pre-and-postsynaptic proteins. Organize the lamina/pathway-specific differentiation of dendrites. Plays an important role for auditory synaptic responses. Involved in the suppression of glioma. The polypeptide is Leucine-rich repeat-containing protein 4 (Lrrc4) (Mus musculus (Mouse)).